A 294-amino-acid chain; its full sequence is Factor associated with metabolism and energy (294 aa).

A compositionally biased stretch (basic residues) spans 1 to 12 (MGLGHSKAHPRV). 2 disordered regions span residues 1–28 (MGLG…TPST) and 255–279 (FWDS…LVRT). Gly-2 carries N-myristoyl glycine lipidation. Over residues 17–28 (PLQSQETETPST) the composition is skewed to polar residues. Residues 268–279 (KDERRPQALVRT) show a composition bias toward basic and acidic residues.

In terms of tissue distribution, expressed in proximal tubules of the kidney.

The protein localises to the cell membrane. The protein resides in the cytoplasmic vesicle. In terms of biological role, may be involved in tuning the metabolism, energy expenditure, and excretion processes. This is Factor associated with metabolism and energy from Mus musculus (Mouse).